The chain runs to 553 residues: Thermosome subunit beta (553 aa).

The tract at residues 534-553 (KKSEGKTGEKKESEKGKEED) is disordered.

It belongs to the TCP-1 chaperonin family. Forms a Heterooligomeric complex of two stacked eight-membered rings.

Its function is as follows. Molecular chaperone; binds unfolded polypeptides in vitro, and has a weak ATPase activity. The polypeptide is Thermosome subunit beta (thsB) (Sulfolobus acidocaldarius (strain ATCC 33909 / DSM 639 / JCM 8929 / NBRC 15157 / NCIMB 11770)).